The primary structure comprises 435 residues: Cell adhesion molecule 2 (435 aa).

Residues methionine 1–glycine 24 form the signal peptide. At glutamine 25–histidine 367 the chain is on the extracellular side. Residues proline 27 to threonine 119 form the Ig-like V-type domain. Asparagine 31 and asparagine 51 each carry an N-linked (GlcNAc...) asparagine glycan. 3 cysteine pairs are disulfide-bonded: cysteine 44-cysteine 104, cysteine 146-cysteine 203, and cysteine 248-cysteine 296. Ig-like C2-type domains follow at residues proline 127 to glutamine 219 and proline 227 to isoleucine 312. N-linked (GlcNAc...) asparagine glycosylation is present at asparagine 291. Low complexity predominate over residues serine 337 to serine 351. The tract at residues serine 337–alanine 360 is disordered. Residues alanine 368–leucine 388 form a helical membrane-spanning segment. Residues glycine 389–isoleucine 435 lie on the Cytoplasmic side of the membrane. At serine 423 the chain carries Phosphoserine.

The protein belongs to the nectin family. In terms of processing, glycosylation at Asn-51 reduces adhesive binding.

The protein resides in the cell membrane. Its subcellular location is the synapse. It is found in the cell projection. It localises to the axon. Adhesion molecule that engages in homo- and heterophilic interactions with the other nectin-like family members, leading to cell aggregation. Important for synapse organization, providing regulated trans-synaptic adhesion. Preferentially binds to oligodendrocytes. This Mus musculus (Mouse) protein is Cell adhesion molecule 2 (Cadm2).